We begin with the raw amino-acid sequence, 61 residues long: MVMMKSFIVKGKFKAGSTWEKFTKKIESQNEKNATDKTYSIFGSKHGVKRSQVQIESVAEE.

The protein belongs to the eukaryotic ribosomal protein eL20 family. As to quaternary structure, part of the 50S ribosomal subunit. Binds 23S rRNA.

This chain is Large ribosomal subunit protein eL20, found in Methanosarcina acetivorans (strain ATCC 35395 / DSM 2834 / JCM 12185 / C2A).